The primary structure comprises 103 residues: Co-chaperonin GroES (103 aa).

Belongs to the GroES chaperonin family. In terms of assembly, heptamer of 7 subunits arranged in a ring. Interacts with the chaperonin GroEL.

It is found in the cytoplasm. Together with the chaperonin GroEL, plays an essential role in assisting protein folding. The GroEL-GroES system forms a nano-cage that allows encapsulation of the non-native substrate proteins and provides a physical environment optimized to promote and accelerate protein folding. GroES binds to the apical surface of the GroEL ring, thereby capping the opening of the GroEL channel. This is Co-chaperonin GroES from Synechococcus sp. (strain CC9902).